The chain runs to 159 residues: RNA pyrophosphohydrolase (159 aa).

In terms of domain architecture, Nudix hydrolase spans Gly-6–Lys-149. The short motif at Gly-38–Gly-59 is the Nudix box element.

The protein belongs to the Nudix hydrolase family. RppH subfamily. The cofactor is a divalent metal cation.

In terms of biological role, accelerates the degradation of transcripts by removing pyrophosphate from the 5'-end of triphosphorylated RNA, leading to a more labile monophosphorylated state that can stimulate subsequent ribonuclease cleavage. The protein is RNA pyrophosphohydrolase of Pseudomonas aeruginosa (strain LESB58).